The chain runs to 243 residues: Adenosylcobinamide-GDP ribazoletransferase (243 aa).

A run of 5 helical transmembrane segments spans residues 31-51 (LLFY…FSAL), 57-77 (LMLH…GLHL), 109-129 (IAVV…LALI), 135-155 (IGLL…FLGT), and 188-208 (VLLA…CFFW).

It belongs to the CobS family. The cofactor is Mg(2+).

It localises to the cell inner membrane. The catalysed reaction is alpha-ribazole + adenosylcob(III)inamide-GDP = adenosylcob(III)alamin + GMP + H(+). It carries out the reaction alpha-ribazole 5'-phosphate + adenosylcob(III)inamide-GDP = adenosylcob(III)alamin 5'-phosphate + GMP + H(+). Its pathway is cofactor biosynthesis; adenosylcobalamin biosynthesis; adenosylcobalamin from cob(II)yrinate a,c-diamide: step 7/7. Functionally, joins adenosylcobinamide-GDP and alpha-ribazole to generate adenosylcobalamin (Ado-cobalamin). Also synthesizes adenosylcobalamin 5'-phosphate from adenosylcobinamide-GDP and alpha-ribazole 5'-phosphate. The sequence is that of Adenosylcobinamide-GDP ribazoletransferase from Pseudomonas savastanoi pv. phaseolicola (strain 1448A / Race 6) (Pseudomonas syringae pv. phaseolicola (strain 1448A / Race 6)).